The sequence spans 463 residues: Trigger factor (463 aa).

One can recognise a PPIase FKBP-type domain in the interval 162 to 243 (GDVVTLDLEA…VSQVAARELP (82 aa)). The segment at 427–463 (TNGEIVDLDDEDETESTPETTEAAEAAEESTEDKPEA) is disordered. Residues 432 to 442 (VDLDDEDETES) show a composition bias toward acidic residues.

This sequence belongs to the FKBP-type PPIase family. Tig subfamily.

The protein localises to the cytoplasm. It catalyses the reaction [protein]-peptidylproline (omega=180) = [protein]-peptidylproline (omega=0). Functionally, involved in protein export. Acts as a chaperone by maintaining the newly synthesized protein in an open conformation. Functions as a peptidyl-prolyl cis-trans isomerase. This chain is Trigger factor, found in Streptomyces avermitilis (strain ATCC 31267 / DSM 46492 / JCM 5070 / NBRC 14893 / NCIMB 12804 / NRRL 8165 / MA-4680).